Here is a 503-residue protein sequence, read N- to C-terminus: Probable cytosol aminopeptidase (503 aa).

Positions 274 and 279 each coordinate Mn(2+). Lysine 286 is an active-site residue. Residues aspartate 297, aspartate 356, and glutamate 358 each coordinate Mn(2+). Arginine 360 is an active-site residue.

This sequence belongs to the peptidase M17 family. The cofactor is Mn(2+).

It is found in the cytoplasm. The enzyme catalyses Release of an N-terminal amino acid, Xaa-|-Yaa-, in which Xaa is preferably Leu, but may be other amino acids including Pro although not Arg or Lys, and Yaa may be Pro. Amino acid amides and methyl esters are also readily hydrolyzed, but rates on arylamides are exceedingly low.. It carries out the reaction Release of an N-terminal amino acid, preferentially leucine, but not glutamic or aspartic acids.. Presumably involved in the processing and regular turnover of intracellular proteins. Catalyzes the removal of unsubstituted N-terminal amino acids from various peptides. The protein is Probable cytosol aminopeptidase of Burkholderia thailandensis (strain ATCC 700388 / DSM 13276 / CCUG 48851 / CIP 106301 / E264).